Here is a 308-residue protein sequence, read N- to C-terminus: D-alanine--D-alanine ligase B (308 aa).

The ATP-grasp domain occupies Lys102 to Glu302. Pro128–Thr183 is an ATP binding site. Positions 252, 269, and 271 each coordinate Mg(2+).

Belongs to the D-alanine--D-alanine ligase family. It depends on Mg(2+) as a cofactor. Mn(2+) is required as a cofactor.

It is found in the cytoplasm. It carries out the reaction 2 D-alanine + ATP = D-alanyl-D-alanine + ADP + phosphate + H(+). The protein operates within cell wall biogenesis; peptidoglycan biosynthesis. Cell wall formation. The chain is D-alanine--D-alanine ligase B from Mesorhizobium japonicum (strain LMG 29417 / CECT 9101 / MAFF 303099) (Mesorhizobium loti (strain MAFF 303099)).